A 324-amino-acid chain; its full sequence is Interactor of constitutive active ROPs 4 (324 aa).

4 disordered regions span residues 1–74 (MPKP…SGLE), 91–156 (LAKA…ASKE), 175–201 (SLSE…KAKE), and 289–324 (FVGS…KGQK). The span at 13–28 (QRQSPRLRTSLLSTSS) shows a compositional bias: low complexity. Composition is skewed to basic and acidic residues over residues 29-50 (DPHH…DRRS), 95-106 (EAAKKRAQEELH), and 118-156 (PERD…ASKE). The stretch at 62–266 (SQKKLGSRIS…ADAAAAVLSG (205 aa)) forms a coiled coil. Over residues 313–324 (MFGDLWKKKGQK) the composition is skewed to basic and acidic residues.

Belongs to the ICR family. As to quaternary structure, interacts with ARAC11 in vitro.

In terms of biological role, acts as a scaffold, mediating interaction of ROPs with different proteins. This chain is Interactor of constitutive active ROPs 4 (ICR4), found in Arabidopsis thaliana (Mouse-ear cress).